The sequence spans 213 residues: Ras-like protein rasU (213 aa).

GTP is bound at residue 21-28 (GDGGVGKT). An Effector region motif is present at residues 43–51 (YDPTIEDLY). GTP contacts are provided by residues 68 to 72 (DTAGQ) and 126 to 129 (NKSD). Position 210 is a cysteine methyl ester (Cys210). Cys210 is lipidated: S-geranylgeranyl cysteine. Positions 211–213 (KMI) are cleaved as a propeptide — removed in mature form.

It belongs to the small GTPase superfamily. Ras family.

The protein localises to the cell membrane. The enzyme catalyses GTP + H2O = GDP + phosphate + H(+). Ras proteins bind GDP/GTP and possess intrinsic GTPase activity. The protein is Ras-like protein rasU (rasU) of Dictyostelium discoideum (Social amoeba).